A 58-amino-acid chain; its full sequence is Large ribosomal subunit protein bL32 (58 aa).

Residues 1-19 (MAVPKKRTSKSKKNMRKAN) show a composition bias toward basic residues. The disordered stretch occupies residues 1-58 (MAVPKKRTSKSKKNMRKANWKNQAKLAAKKALSLGKSVETQRSHSFVHPRYEEEEEED). A compositionally biased stretch (low complexity) spans 20 to 32 (WKNQAKLAAKKAL).

This sequence belongs to the bacterial ribosomal protein bL32 family.

This Trichodesmium erythraeum (strain IMS101) protein is Large ribosomal subunit protein bL32.